A 200-amino-acid polypeptide reads, in one-letter code: Phospholipase A2 inhibitor CgMIP-I (200 aa).

A signal peptide spans M1 to S19. Cystine bridges form between C22–C46, C25–C32, C39–C67, C73–C94, C95–C100, C118–C143, and C136–C165. A glycan (N-linked (GlcNAc...) asparagine) is linked at N176.

This sequence belongs to the CNF-like-inhibitor family. As to quaternary structure, homomer of 110 kDa composed of 20-25-kDa subunits. N-glycosylated. The glycosidic chain may contain superficial sialic acid residues. In terms of tissue distribution, expressed by the liver.

It is found in the secreted. Inhibits the enzymatic activity of basic phospholipase A2. Specifically neutralizes PLA2, myotoxic, edema-forming, cytolytic, and anti-coagulant activities, as well as intracerebral lethal effect of the basic myotoxin I from the same venom (AC P0DQP6), crotoxin heterodimer and crotoxin subunit B alone. Does not block the enzymatic activity of crude acidic PLA2 fractions from the same venom. The polypeptide is Phospholipase A2 inhibitor CgMIP-I (Cerrophidion godmani (Porthidium godmani)).